A 225-amino-acid polypeptide reads, in one-letter code: Cytidylate kinase (225 aa).

ATP is bound at residue G10–T18.

This sequence belongs to the cytidylate kinase family. Type 1 subfamily.

It is found in the cytoplasm. The catalysed reaction is CMP + ATP = CDP + ADP. It carries out the reaction dCMP + ATP = dCDP + ADP. The chain is Cytidylate kinase from Streptococcus suis (strain 98HAH33).